A 430-amino-acid polypeptide reads, in one-letter code: MKQALRVAFGFLILWASVLHAEVRIVIDSGVDSGRPIGVVPFQWAGPGAAPEDIGGIVAADLRNSGKFNPLDRARLPQQPGSAQEVQPSAWSALGIDAVVVGQVTPNPDGSYNVAYQLVDTGGAPGTVLAQNSYKVNKQWLRYAGHTASDEVFEKLTGIKGAFRTRIAYVVQTNGGQFPYELRVSDYDGYNQFVVHRSPQPLMSPAWSPDGSKLAYVTFESGRSALVIQTLANGAVRQVASFPRHNGAPAFSPDGSKLAFALSKTGSLNLYVMDLASGQIRQVTDGRSNNTEPTWFPDSQNLAFTSDQAGRPQVYKVNINGGAPQRITWEGSQNQDADVSSDGKFMVMVSSNGGQQHIAKQDLATGGVQVLSSTFLDETPSLAPNGTMVIYSSSQGMGSVLNLVSTDGRFKARLPATDGQVKFPAWSPYL.

An N-terminal signal peptide occupies residues 1–21 (MKQALRVAFGFLILWASVLHA).

The protein belongs to the TolB family. In terms of assembly, the Tol-Pal system is composed of five core proteins: the inner membrane proteins TolA, TolQ and TolR, the periplasmic protein TolB and the outer membrane protein Pal. They form a network linking the inner and outer membranes and the peptidoglycan layer.

Its subcellular location is the periplasm. In terms of biological role, part of the Tol-Pal system, which plays a role in outer membrane invagination during cell division and is important for maintaining outer membrane integrity. TolB occupies a key intermediary position in the Tol-Pal system because it communicates directly with both membrane-embedded components, Pal in the outer membrane and TolA in the inner membrane. The protein is Tol-Pal system protein TolB of Shigella boydii serotype 18 (strain CDC 3083-94 / BS512).